We begin with the raw amino-acid sequence, 302 residues long: Oxygen-dependent coproporphyrinogen-III oxidase (302 aa).

Ser94 contributes to the substrate binding site. Residues His98 and His108 each contribute to the a divalent metal cation site. Residue His108 is the Proton donor of the active site. Asn110–Arg112 serves as a coordination point for substrate. A divalent metal cation-binding residues include His147 and His177. The interval Tyr242 to Gln277 is important for dimerization. Residue Gly260–Arg262 participates in substrate binding.

Belongs to the aerobic coproporphyrinogen-III oxidase family. Homodimer. A divalent metal cation serves as cofactor.

The protein resides in the cytoplasm. The enzyme catalyses coproporphyrinogen III + O2 + 2 H(+) = protoporphyrinogen IX + 2 CO2 + 2 H2O. The protein operates within porphyrin-containing compound metabolism; protoporphyrin-IX biosynthesis; protoporphyrinogen-IX from coproporphyrinogen-III (O2 route): step 1/1. Functionally, involved in the heme biosynthesis. Catalyzes the aerobic oxidative decarboxylation of propionate groups of rings A and B of coproporphyrinogen-III to yield the vinyl groups in protoporphyrinogen-IX. The protein is Oxygen-dependent coproporphyrinogen-III oxidase of Shewanella putrefaciens (strain CN-32 / ATCC BAA-453).